The chain runs to 233 residues: LexA repressor (233 aa).

The segment at residues 26 to 46 (FDEMKDALDLRSKSGIHRLIT) is a DNA-binding region (H-T-H motif). Catalysis depends on for autocatalytic cleavage activity residues serine 154 and lysine 192.

It belongs to the peptidase S24 family. In terms of assembly, homodimer.

The enzyme catalyses Hydrolysis of Ala-|-Gly bond in repressor LexA.. Functionally, represses a number of genes involved in the response to DNA damage (SOS response), including recA and lexA. In the presence of single-stranded DNA, RecA interacts with LexA causing an autocatalytic cleavage which disrupts the DNA-binding part of LexA, leading to derepression of the SOS regulon and eventually DNA repair. This chain is LexA repressor, found in Nitrobacter winogradskyi (strain ATCC 25391 / DSM 10237 / CIP 104748 / NCIMB 11846 / Nb-255).